The sequence spans 623 residues: MPHSDELDAGNVLAVENLNIAFMQDQQKIAAVRNLSFSLQRGETLAIVGESGSGKSVTALALMRLLEQAGGLVQCDKMLLRRRSRDVIELSEQSAAQMRHVRGADMAMIFQEPMTSLNPVFTVGEQIAESIRLHQNASREEAMVEAKRMLDQVRIPEAQTILSRYSHQLSGGMRQRVMIAMALSCRPAVLIADEPTTALDVTIQAQILQLIKVLQKEMSMGVIFITHDMGVVAEIADRVLVMYQGEAVETGTVEQIFHAPQHPYTRALLAAVPQLGAMKGLDYPRRFPLISLEHPAKQEPPIEQKTVVDGEPVLRVRNLVTRFPLRSGLLNRVTREVHAVEKVSFDLWPGETLSLVGESGSGKSTTGRALLRLVESQGGEIIFNGQRIDTLSPGKLQALRRDIQFIFQDPYASLDPRQTIGDSIIEPLRVHGLLPGKDAAARVAWLLERVGLLPEHAWRYPHEFSGGQRQRICIARALALNPKVIIADEAVSALDVSIRGQIINLLLDLQRDFGIAYLFISHDMAVVERISHRVAVMYLGQIVEIGSRCAVFENPQHPYTRKLLAAVPVAEPSRQRPQRVLLSDDLPSNIHLRGEEVAAVSLQCVGPGHYVAQPQSEYAFMRR.

ABC transporter domains follow at residues 15–269 (VENL…RALL) and 314–564 (LRVR…RKLL). ATP-binding positions include 49–56 (GESGSGKS) and 357–364 (GESGSGKS).

The protein belongs to the ABC transporter superfamily. Glutathione importer (TC 3.A.1.5.11) family. The complex is composed of two ATP-binding proteins (GsiA), two transmembrane proteins (GsiC and GsiD) and a solute-binding protein (GsiB).

The protein localises to the cell inner membrane. It carries out the reaction glutathione(out) + ATP + H2O = glutathione(in) + ADP + phosphate + H(+). Part of the ABC transporter complex GsiABCD involved in glutathione import. Responsible for energy coupling to the transport system. This Shigella flexneri protein is Glutathione import ATP-binding protein GsiA.